Here is a 263-residue protein sequence, read N- to C-terminus: uncharacterized protein (263 aa).

The segment at 198-224 is disordered; it reads KRSSDSFVSLKPGEDEHSPLEISTCGN.

This is an uncharacterized protein from Saccharomyces cerevisiae (strain ATCC 204508 / S288c) (Baker's yeast).